Here is an 845-residue protein sequence, read N- to C-terminus: uncharacterized protein (845 aa).

Disordered stretches follow at residues 17-37 (RRKQDALHSPSLNMDKKNDQP) and 550-573 (AATEAEVEDQNSERNDDNALNESL). Residues 622-707 (LSEQRFEREN…ELKKSNEHTR (86 aa)) are a coiled coil.

This is an uncharacterized protein from Saccharum officinarum (Sugarcane).